A 440-amino-acid chain; its full sequence is Xylose isomerase (440 aa).

Residues H101 and D104 contribute to the active site. Positions 232, 268, 271, 296, 307, 309, and 339 each coordinate Mg(2+).

Belongs to the xylose isomerase family. As to quaternary structure, homotetramer. Mg(2+) serves as cofactor.

The protein resides in the cytoplasm. It carries out the reaction alpha-D-xylose = alpha-D-xylulofuranose. The sequence is that of Xylose isomerase from Escherichia coli (strain SE11).